Consider the following 462-residue polypeptide: Cysteine--tRNA ligase (462 aa).

A Zn(2+)-binding site is contributed by cysteine 30. The 'HIGH' region signature appears at methionine 32–histidine 42. 3 residues coordinate Zn(2+): cysteine 214, histidine 239, and glutamate 243. Residues lysine 271 to serine 275 carry the 'KMSKS' region motif. Lysine 274 is an ATP binding site.

Belongs to the class-I aminoacyl-tRNA synthetase family. Monomer. It depends on Zn(2+) as a cofactor.

It localises to the cytoplasm. It catalyses the reaction tRNA(Cys) + L-cysteine + ATP = L-cysteinyl-tRNA(Cys) + AMP + diphosphate. In Cupriavidus pinatubonensis (strain JMP 134 / LMG 1197) (Cupriavidus necator (strain JMP 134)), this protein is Cysteine--tRNA ligase.